Reading from the N-terminus, the 1264-residue chain is Protein fantom (1264 aa).

4 coiled-coil regions span residues 64–143 (LKQH…LQVQ), 196–268 (YSNS…NVET), 299–454 (LRIS…ESDI), and 488–555 (NKDL…VHLL). C2 domains lie at 577 to 714 (KQYK…FCTT) and 773 to 897 (AATT…SGIF). Disordered regions lie at residues 979-1018 (DTIS…YPSK) and 1047-1093 (QLAS…NTKQ). Residues 1056-1080 (SEDETEITEELEPEDEDRSASDSDD) are compositionally biased toward acidic residues.

It belongs to the RPGRIP1 family. As to quaternary structure, interacts with NPHP4 and NPHP1; NPHP1, NPHP4 and RPGRIP1L are proposed to form a functional NPHP1-4-8 module localized to cell-cell contacts and the ciliary transition zone; NPHP4 mediates the interaction between NPHP1 and RPGRIP1L. Interacts with IQCB1; the interaction likely requires additional interactors. Interacts with TBXA2R (via C-terminus), RPGR, NEK4. Interacts with NPHP4, INVS and DVL2; proposed to form a complex involved in DVL2 stabilization. Interacts with PSMD2. Ubiquitously expressed. Not found in heart and skin.

The protein resides in the cytoplasm. It is found in the cytoskeleton. The protein localises to the cilium basal body. It localises to the cilium axoneme. Its subcellular location is the microtubule organizing center. The protein resides in the centrosome. It is found in the cell junction. The protein localises to the tight junction. Functionally, negatively regulates signaling through the G-protein coupled thromboxane A2 receptor (TBXA2R). May be involved in mechanisms like programmed cell death, craniofacial development, patterning of the limbs, and formation of the left-right axis. Involved in the organization of apical junctions; the function is proposed to implicate a NPHP1-4-8 module. Does not seem to be strictly required for ciliogenesis. Involved in establishment of planar cell polarity such as in cochlear sensory epithelium and is proposed to implicate stabilization of disheveled proteins. Involved in regulation of proteasomal activity at the primary cilium probably implicating association with PSDM2. The protein is Protein fantom (Rpgrip1l) of Mus musculus (Mouse).